We begin with the raw amino-acid sequence, 154 residues long: Superoxide dismutase [Cu-Zn] (154 aa).

2 residues coordinate Cu cation: His47 and His64. An intrachain disulfide couples Cys58 to Cys147. His64, His72, His81, and Asp84 together coordinate Zn(2+). Cu cation is bound at residue His121. Arg144 contacts substrate.

It belongs to the Cu-Zn superoxide dismutase family. In terms of assembly, homodimer. Cu cation serves as cofactor. The cofactor is Zn(2+).

The protein resides in the cytoplasm. It carries out the reaction 2 superoxide + 2 H(+) = H2O2 + O2. Its function is as follows. Destroys radicals which are normally produced within the cells and which are toxic to biological systems. The chain is Superoxide dismutase [Cu-Zn] (SOD1) from Pleurocordyceps sinensis (Polycephalomyces sinensis).